The sequence spans 94 residues: uncharacterized protein (94 aa).

An N-terminal signal peptide occupies residues 1–25 (MRAAIAVLFIALVGLATYHLVMSQA).

This is an uncharacterized protein from Archaeoglobus fulgidus (strain ATCC 49558 / DSM 4304 / JCM 9628 / NBRC 100126 / VC-16).